The primary structure comprises 456 residues: ATP synthase subunit beta 1 (456 aa).

152-159 (GGAGVGKS) is a binding site for ATP.

It belongs to the ATPase alpha/beta chains family. In terms of assembly, F-type ATPases have 2 components, CF(1) - the catalytic core - and CF(0) - the membrane proton channel. CF(1) has five subunits: alpha(3), beta(3), gamma(1), delta(1), epsilon(1). CF(0) has three main subunits: a(1), b(2) and c(9-12). The alpha and beta chains form an alternating ring which encloses part of the gamma chain. CF(1) is attached to CF(0) by a central stalk formed by the gamma and epsilon chains, while a peripheral stalk is formed by the delta and b chains.

It localises to the cell membrane. The catalysed reaction is ATP + H2O + 4 H(+)(in) = ADP + phosphate + 5 H(+)(out). Functionally, produces ATP from ADP in the presence of a proton gradient across the membrane. The catalytic sites are hosted primarily by the beta subunits. This chain is ATP synthase subunit beta 1, found in Listeria innocua serovar 6a (strain ATCC BAA-680 / CLIP 11262).